A 369-amino-acid polypeptide reads, in one-letter code: Putative F-box/kelch-repeat protein At4g39760 (369 aa).

In terms of domain architecture, F-box spans 14 to 60 (SLSFSSLPHEIVVSCLARVSGSYYPKLCLVSKQFRSIILSNEIYKAR). Kelch repeat units follow at residues 131-177 (ETYI…GQYP), 178-224 (NIYV…KMKM), and 228-274 (NVYV…KNCW).

The sequence is that of Putative F-box/kelch-repeat protein At4g39760 from Arabidopsis thaliana (Mouse-ear cress).